A 154-amino-acid chain; its full sequence is uncharacterized protein (154 aa).

The protein localises to the mitochondrion. This is an uncharacterized protein from Vicia faba (Broad bean).